The primary structure comprises 213 residues: Orotate phosphoribosyltransferase (213 aa).

5-phospho-alpha-D-ribose 1-diphosphate is bound at residue Lys26. 34–35 (FF) lines the orotate pocket. Residues 72 to 73 (YK), Arg99, Lys100, Lys103, His105, and 124 to 132 (DDVITAGTA) contribute to the 5-phospho-alpha-D-ribose 1-diphosphate site. 2 residues coordinate orotate: Thr128 and Arg156.

The protein belongs to the purine/pyrimidine phosphoribosyltransferase family. PyrE subfamily. In terms of assembly, homodimer. Mg(2+) is required as a cofactor.

It catalyses the reaction orotidine 5'-phosphate + diphosphate = orotate + 5-phospho-alpha-D-ribose 1-diphosphate. It functions in the pathway pyrimidine metabolism; UMP biosynthesis via de novo pathway; UMP from orotate: step 1/2. Its function is as follows. Catalyzes the transfer of a ribosyl phosphate group from 5-phosphoribose 1-diphosphate to orotate, leading to the formation of orotidine monophosphate (OMP). This is Orotate phosphoribosyltransferase from Pseudomonas syringae pv. tomato (strain ATCC BAA-871 / DC3000).